The sequence spans 418 residues: STAM-binding protein-like A (418 aa).

The tract at residues 199–218 is disordered; the sequence is PDVHGPPQASLSPQTPPAGA. In terms of domain architecture, MPN spans 251 to 382; it reads LFVPAELCQR…LTDYGMDDVG (132 aa). Positions 329, 331, 342, 344, 384, 390, and 392 each coordinate Zn(2+). The JAMM motif signature appears at 329–342; it reads HTHPTQTAFLSSVD.

This sequence belongs to the peptidase M67C family. Zn(2+) serves as cofactor.

Zinc metalloprotease that specifically cleaves 'Lys-63'-linked polyubiquitin chains. Does not cleave 'Lys-48'-linked polyubiquitin chains. Functions at the endosome and is able to oppose the ubiquitin-dependent sorting of receptors to lysosomes. This chain is STAM-binding protein-like A (stambpa), found in Danio rerio (Zebrafish).